Consider the following 422-residue polypeptide: uncharacterized protein (422 aa).

Residues 1–23 (MLSLIPFTVCAFLALITSKGGSA) form the signal peptide.

In terms of tissue distribution, component of the acid-insoluble organic matrix of the aragonitic skeleton (at protein level).

It is found in the secreted. This is an uncharacterized protein from Acropora millepora (Staghorn coral).